The following is an 80-amino-acid chain: MKPEIHPIYREVVFHDVTSNFKFLTRSTMSTKETTLWEDGREYPLVKVEISSASHPFYTGKHKLVDTSGRIDKFKKRYAR.

Belongs to the bacterial ribosomal protein bL31 family. Type B subfamily. As to quaternary structure, part of the 50S ribosomal subunit.

This chain is Large ribosomal subunit protein bL31B, found in Xylella fastidiosa (strain 9a5c).